A 379-amino-acid chain; its full sequence is MTISDVPTQTLPAEGEIGLIDVGSLQLESGAVIDDVCIAVQRWGKLSPARDNVVVVLHALTGDSHITGPAGPGHPTPGWWDGVAGPSAPIDTTRWCAVATNVLGGCRGSTGPSSLARDGKPWGSRFPLISIRDQVQADVAALAALGITEVAAVVGGSMGGARALEWVVGYPDRVRAGLLLAVGARATADQIGTQTTQIAAIKADPDWQSGDYHETGRAPDAGLRLARRFAHLTYRGEIELDTRFANHNQGNEDPTAGGRYAVQSYLEHQGDKLLSRFDAGSYVILTEALNSHDVGRGRGGVSAALRACPVPVVVGGITSDRLYPLRLQQELADLLPGCAGLRVVESVYGHDGFLVETEAVGELIRQTLGLADREGACRR.

Residues 52-356 form the AB hydrolase-1 domain; the sequence is NVVVVLHALT…VYGHDGFLVE (305 aa). Catalysis depends on S157, which acts as the Nucleophile. R227 is a substrate binding site. Active-site residues include D320 and H350. D351 provides a ligand contact to substrate.

It belongs to the AB hydrolase superfamily. MetX family. Homodimer.

It is found in the cytoplasm. It carries out the reaction L-homoserine + acetyl-CoA = O-acetyl-L-homoserine + CoA. The protein operates within amino-acid biosynthesis; L-methionine biosynthesis via de novo pathway; O-acetyl-L-homoserine from L-homoserine: step 1/1. In terms of biological role, transfers an acetyl group from acetyl-CoA to L-homoserine, forming acetyl-L-homoserine. The polypeptide is Homoserine O-acetyltransferase (Mycobacterium tuberculosis (strain CDC 1551 / Oshkosh)).